A 160-amino-acid chain; its full sequence is ATP synthase subunit b (160 aa).

A helical transmembrane segment spans residues 15–35 (LVIVIGLLFWFLRGFLGGILE).

It belongs to the ATPase B chain family. As to quaternary structure, F-type ATPases have 2 components, F(1) - the catalytic core - and F(0) - the membrane proton channel. F(1) has five subunits: alpha(3), beta(3), gamma(1), delta(1), epsilon(1). F(0) has four main subunits: a(1), b(1), b'(1) and c(10-14). The alpha and beta chains form an alternating ring which encloses part of the gamma chain. F(1) is attached to F(0) by a central stalk formed by the gamma and epsilon chains, while a peripheral stalk is formed by the delta, b and b' chains.

The protein localises to the cellular thylakoid membrane. Functionally, f(1)F(0) ATP synthase produces ATP from ADP in the presence of a proton or sodium gradient. F-type ATPases consist of two structural domains, F(1) containing the extramembraneous catalytic core and F(0) containing the membrane proton channel, linked together by a central stalk and a peripheral stalk. During catalysis, ATP synthesis in the catalytic domain of F(1) is coupled via a rotary mechanism of the central stalk subunits to proton translocation. Component of the F(0) channel, it forms part of the peripheral stalk, linking F(1) to F(0). The sequence is that of ATP synthase subunit b from Synechococcus sp. (strain CC9605).